Consider the following 378-residue polypeptide: Cobalt-precorrin-5B C(1)-methyltransferase (378 aa).

The protein belongs to the CbiD family.

The enzyme catalyses Co-precorrin-5B + S-adenosyl-L-methionine = Co-precorrin-6A + S-adenosyl-L-homocysteine. The protein operates within cofactor biosynthesis; adenosylcobalamin biosynthesis; cob(II)yrinate a,c-diamide from sirohydrochlorin (anaerobic route): step 6/10. In terms of biological role, catalyzes the methylation of C-1 in cobalt-precorrin-5B to form cobalt-precorrin-6A. This is Cobalt-precorrin-5B C(1)-methyltransferase from Tolumonas auensis (strain DSM 9187 / NBRC 110442 / TA 4).